Reading from the N-terminus, the 298-residue chain is Bifunctional protein FolD (298 aa).

Residues 166–168, Ser-191, and Ile-232 contribute to the NADP(+) site; that span reads GRS.

Belongs to the tetrahydrofolate dehydrogenase/cyclohydrolase family. In terms of assembly, homodimer.

It catalyses the reaction (6R)-5,10-methylene-5,6,7,8-tetrahydrofolate + NADP(+) = (6R)-5,10-methenyltetrahydrofolate + NADPH. The catalysed reaction is (6R)-5,10-methenyltetrahydrofolate + H2O = (6R)-10-formyltetrahydrofolate + H(+). It participates in one-carbon metabolism; tetrahydrofolate interconversion. Its function is as follows. Catalyzes the oxidation of 5,10-methylenetetrahydrofolate to 5,10-methenyltetrahydrofolate and then the hydrolysis of 5,10-methenyltetrahydrofolate to 10-formyltetrahydrofolate. In Erythrobacter litoralis (strain HTCC2594), this protein is Bifunctional protein FolD.